The chain runs to 596 residues: Structural protein precursor VP8 (596 aa).

The protein localises to the virion. Its function is as follows. 120 subunits of the putative clamp protein VP8b appear to stabilize the capsid shell. The polypeptide is Structural protein precursor VP8 (Oryza latifolia (Indian wild rice)).